Consider the following 136-residue polypeptide: Small ribosomal subunit protein uS9 (136 aa).

The tract at residues 95-136 (GLSPDNRKPLKTEGHLSRDPRSKERKKYGLKKARKAGQFSKR) is disordered. The segment covering 99 to 116 (DNRKPLKTEGHLSRDPRS) has biased composition (basic and acidic residues). Residues 117-136 (KERKKYGLKKARKAGQFSKR) show a composition bias toward basic residues.

This sequence belongs to the universal ribosomal protein uS9 family.

The polypeptide is Small ribosomal subunit protein uS9 (Prochlorococcus marinus subsp. pastoris (strain CCMP1986 / NIES-2087 / MED4)).